Consider the following 82-residue polypeptide: Phosphoribosylformylglycinamidine synthase subunit PurS (82 aa).

Belongs to the PurS family. Homodimer. Part of the FGAM synthase complex composed of 1 PurL, 1 PurQ and 2 PurS subunits.

It is found in the cytoplasm. The enzyme catalyses N(2)-formyl-N(1)-(5-phospho-beta-D-ribosyl)glycinamide + L-glutamine + ATP + H2O = 2-formamido-N(1)-(5-O-phospho-beta-D-ribosyl)acetamidine + L-glutamate + ADP + phosphate + H(+). Its pathway is purine metabolism; IMP biosynthesis via de novo pathway; 5-amino-1-(5-phospho-D-ribosyl)imidazole from N(2)-formyl-N(1)-(5-phospho-D-ribosyl)glycinamide: step 1/2. Part of the phosphoribosylformylglycinamidine synthase complex involved in the purines biosynthetic pathway. Catalyzes the ATP-dependent conversion of formylglycinamide ribonucleotide (FGAR) and glutamine to yield formylglycinamidine ribonucleotide (FGAM) and glutamate. The FGAM synthase complex is composed of three subunits. PurQ produces an ammonia molecule by converting glutamine to glutamate. PurL transfers the ammonia molecule to FGAR to form FGAM in an ATP-dependent manner. PurS interacts with PurQ and PurL and is thought to assist in the transfer of the ammonia molecule from PurQ to PurL. The polypeptide is Phosphoribosylformylglycinamidine synthase subunit PurS (Thermotoga maritima (strain ATCC 43589 / DSM 3109 / JCM 10099 / NBRC 100826 / MSB8)).